The primary structure comprises 332 residues: L-lactate dehydrogenase A chain (332 aa).

NAD(+)-binding positions include 29 to 57 and Arg-99; that span reads GMVG…MEDK. Residues Arg-106, Asn-138, and Arg-169 each coordinate substrate. Asn-138 is a binding site for NAD(+). His-193 acts as the Proton acceptor in catalysis. Thr-248 is a substrate binding site.

It belongs to the LDH/MDH superfamily. LDH family. Homotetramer.

The protein localises to the cytoplasm. It carries out the reaction (S)-lactate + NAD(+) = pyruvate + NADH + H(+). The protein operates within fermentation; pyruvate fermentation to lactate; (S)-lactate from pyruvate: step 1/1. In terms of biological role, interconverts simultaneously and stereospecifically pyruvate and lactate with concomitant interconversion of NADH and NAD(+). This Sphyraena argentea (Pacific barracuda) protein is L-lactate dehydrogenase A chain (ldha).